A 49-amino-acid polypeptide reads, in one-letter code: Soritesidine (49 aa).

The protein resides in the secreted. Very potent toxin that exhibits a wide range of toxicities over various organisms and cells including brine shrimp larvae (Artemia salina), sea hare eggs (Aplysia kurodai), mice, and cultured mammalian cells. An SOR-containing fraction cleaves plasmid DNA in a bivalent metal ion dependent manner suggesting genotoxicity of SOR. This Spongosorites sp. (strain QM G324170) (Okinawan marine Sponge) protein is Soritesidine.